The sequence spans 428 residues: UPF0597 protein PBPRB0240 (428 aa).

This sequence belongs to the UPF0597 family.

In Photobacterium profundum (strain SS9), this protein is UPF0597 protein PBPRB0240.